Reading from the N-terminus, the 480-residue chain is Phenolic acid decarboxylase (480 aa).

Positions 163, 185, and 227 each coordinate Mn(2+). Prenylated FMN contacts are provided by residues 163-168 and 184-185; these read NVGTYR and MH. Catalysis depends on glutamate 278, which acts as the Proton donor. A disordered region spans residues 443–466; it reads TTPVPPEPNPRETQLLDPPDGTEE.

It belongs to the UbiD family. YclC subfamily. In terms of assembly, homohexamer. Prenylated FMN is required as a cofactor. Mn(2+) serves as cofactor.

The enzyme catalyses 4-hydroxybenzoate + H(+) = phenol + CO2. It catalyses the reaction 3,4-dihydroxybenzoate + H(+) = catechol + CO2. Inhibited by Zn(2+), (2,3,4)-trihydroxybenzoate and (3,4,5)-trihydroxybenzoate. Ammonium and rubidium ions decrease the activity of the carboxylation of 3,4-dihydroxybenzoate by about 20%. In terms of biological role, involved in the non-oxidative decarboxylation and detoxification of phenolic derivatives under anaerobic conditions. Oxygen-sensitive phenolic acid decarboxylase that catalyzes the reversible decarboxylation of 4-hydroxybenzoate and 3,4-dihydroxybenzoate. The chain is Phenolic acid decarboxylase from Sedimentibacter hydroxybenzoicus (Clostridium hydroxybenzoicum).